The sequence spans 242 residues: uncharacterized protein (242 aa).

S-adenosyl-L-methionine-binding residues include Gly-198, Ile-218, and Leu-227.

This sequence belongs to the class IV-like SAM-binding methyltransferase superfamily. RNA methyltransferase TrmH family.

This is an uncharacterized protein from Mycoplasma pneumoniae (strain ATCC 29342 / M129 / Subtype 1) (Mycoplasmoides pneumoniae).